Reading from the N-terminus, the 26-residue chain is Turripeptide OL57 (26 aa).

Contains 2 disulfide bonds. As to expression, expressed by the venom duct.

It localises to the secreted. In terms of biological role, acts as a neurotoxin by inhibiting an ion channel. The polypeptide is Turripeptide OL57 (Iotyrris olangoensis (Sea snail)).